Here is a 91-residue protein sequence, read N- to C-terminus: uncharacterized protein (91 aa).

An N-terminal signal peptide occupies residues 1-20 (MFSRVLALLAVLLLSANTWA).

This sequence belongs to the BhsA/McbA family.

It localises to the periplasm. This is an uncharacterized protein from Escherichia coli O157:H7.